Consider the following 142-residue polypeptide: Large ribosomal subunit protein uL22c (142 aa).

It belongs to the universal ribosomal protein uL22 family. Part of the 50S ribosomal subunit.

It is found in the plastid. The protein resides in the chloroplast. Functionally, this protein binds specifically to 23S rRNA. Its function is as follows. The globular domain of the protein is located near the polypeptide exit tunnel on the outside of the subunit, while an extended beta-hairpin is found that lines the wall of the exit tunnel in the center of the 70S ribosome. This Carica papaya (Papaya) protein is Large ribosomal subunit protein uL22c (rpl22).